The primary structure comprises 245 residues: 1-(5-phosphoribosyl)-5-[(5-phosphoribosylamino)methylideneamino] imidazole-4-carboxamide isomerase (245 aa).

D7 serves as the catalytic Proton acceptor. The active-site Proton donor is the D129.

This sequence belongs to the HisA/HisF family.

It is found in the cytoplasm. The catalysed reaction is 1-(5-phospho-beta-D-ribosyl)-5-[(5-phospho-beta-D-ribosylamino)methylideneamino]imidazole-4-carboxamide = 5-[(5-phospho-1-deoxy-D-ribulos-1-ylimino)methylamino]-1-(5-phospho-beta-D-ribosyl)imidazole-4-carboxamide. The protein operates within amino-acid biosynthesis; L-histidine biosynthesis; L-histidine from 5-phospho-alpha-D-ribose 1-diphosphate: step 4/9. The polypeptide is 1-(5-phosphoribosyl)-5-[(5-phosphoribosylamino)methylideneamino] imidazole-4-carboxamide isomerase (Shewanella pealeana (strain ATCC 700345 / ANG-SQ1)).